A 474-amino-acid chain; its full sequence is tRNA-2-methylthio-N(6)-dimethylallyladenosine synthase (474 aa).

The MTTase N-terminal domain occupies lysine 3–glycine 120. 6 residues coordinate [4Fe-4S] cluster: cysteine 12, cysteine 49, cysteine 83, cysteine 157, cysteine 161, and cysteine 164. A Radical SAM core domain is found at arginine 143–alanine 375. One can recognise a TRAM domain in the interval arginine 378–arginine 441.

It belongs to the methylthiotransferase family. MiaB subfamily. Monomer. The cofactor is [4Fe-4S] cluster.

The protein localises to the cytoplasm. The catalysed reaction is N(6)-dimethylallyladenosine(37) in tRNA + (sulfur carrier)-SH + AH2 + 2 S-adenosyl-L-methionine = 2-methylsulfanyl-N(6)-dimethylallyladenosine(37) in tRNA + (sulfur carrier)-H + 5'-deoxyadenosine + L-methionine + A + S-adenosyl-L-homocysteine + 2 H(+). Catalyzes the methylthiolation of N6-(dimethylallyl)adenosine (i(6)A), leading to the formation of 2-methylthio-N6-(dimethylallyl)adenosine (ms(2)i(6)A) at position 37 in tRNAs that read codons beginning with uridine. This chain is tRNA-2-methylthio-N(6)-dimethylallyladenosine synthase, found in Salmonella enteritidis PT4 (strain P125109).